A 222-amino-acid chain; its full sequence is Beta-amylase (222 aa).

T36 lines the substrate pocket. The active-site Proton acceptor is E74. Substrate is bound by residues N75–A76 and R114.

This sequence belongs to the glycosyl hydrolase 14 family.

The catalysed reaction is Hydrolysis of (1-&gt;4)-alpha-D-glucosidic linkages in polysaccharides so as to remove successive maltose units from the non-reducing ends of the chains.. The sequence is that of Beta-amylase (BMY1) from Secale cereale (Rye).